We begin with the raw amino-acid sequence, 198 residues long: Transcription factor FapR (198 aa).

Positions 102–167 (TRIARGHHLF…HGRTIVEVNS (66 aa)) constitute a MaoC-like domain.

This sequence belongs to the FapR family.

Functionally, transcriptional factor involved in regulation of membrane lipid biosynthesis by repressing genes involved in fatty acid and phospholipid metabolism. The chain is Transcription factor FapR from Geobacillus kaustophilus (strain HTA426).